A 450-amino-acid chain; its full sequence is Homogentisate 1,2-dioxygenase (450 aa).

H304 acts as the Proton acceptor in catalysis. Fe cation contacts are provided by H347 and E353. Homogentisate-binding residues include Y362 and H383. Residue H383 participates in Fe cation binding.

It belongs to the homogentisate dioxygenase family. Hexamer; dimer of trimers. It depends on Fe cation as a cofactor.

It catalyses the reaction homogentisate + O2 = 4-maleylacetoacetate + H(+). It functions in the pathway amino-acid degradation; L-phenylalanine degradation; acetoacetate and fumarate from L-phenylalanine: step 4/6. In terms of biological role, involved in the catabolism of homogentisate (2,5-dihydroxyphenylacetate or 2,5-OH-PhAc), a central intermediate in the degradation of phenylalanine and tyrosine. Catalyzes the oxidative ring cleavage of the aromatic ring of homogentisate to yield maleylacetoacetate. The chain is Homogentisate 1,2-dioxygenase from Burkholderia thailandensis (strain ATCC 700388 / DSM 13276 / CCUG 48851 / CIP 106301 / E264).